Reading from the N-terminus, the 425-residue chain is Isocitrate dehydrogenase [NADP] (425 aa).

Residue Thr-114 participates in NADP(+) binding. 5 residues coordinate D-threo-isocitrate: Ser-123, Asn-125, Arg-129, Arg-139, and Arg-162. Residue Asp-316 participates in Mg(2+) binding. NADP(+) contacts are provided by residues 348-354 (HGTAPKY), Asn-361, Tyr-400, and Arg-404.

It belongs to the isocitrate and isopropylmalate dehydrogenases family. Homodimer. The cofactor is Mg(2+). It depends on Mn(2+) as a cofactor.

The catalysed reaction is D-threo-isocitrate + NADP(+) = 2-oxoglutarate + CO2 + NADPH. Functionally, catalyzes the oxidative decarboxylation of isocitrate to 2-oxoglutarate and carbon dioxide with the concomitant reduction of NADP(+). The sequence is that of Isocitrate dehydrogenase [NADP] (icd) from Helicobacter pylori (strain ATCC 700392 / 26695) (Campylobacter pylori).